A 211-amino-acid chain; its full sequence is Large ribosomal subunit protein uL4 (211 aa).

Positions 52–79 are disordered; that stretch reads GRAEVHGSNSKPYSQKGTGRARRGDKKS. A compositionally biased stretch (polar residues) spans 58–68; the sequence is GSNSKPYSQKG.

It belongs to the universal ribosomal protein uL4 family. As to quaternary structure, part of the 50S ribosomal subunit.

Functionally, one of the primary rRNA binding proteins, this protein initially binds near the 5'-end of the 23S rRNA. It is important during the early stages of 50S assembly. It makes multiple contacts with different domains of the 23S rRNA in the assembled 50S subunit and ribosome. Forms part of the polypeptide exit tunnel. The chain is Large ribosomal subunit protein uL4 from Treponema denticola (strain ATCC 35405 / DSM 14222 / CIP 103919 / JCM 8153 / KCTC 15104).